Consider the following 133-residue polypeptide: UPF0292 protein TON_0187 (133 aa).

One can recognise a Toprim domain in the interval 20–100 (EGAIIVEGPR…RVDSETRKEL (81 aa)). Glu-26, Asp-69, and Asp-71 together coordinate Mg(2+).

It belongs to the UPF0292 family. Requires Mg(2+) as cofactor.

This chain is UPF0292 protein TON_0187, found in Thermococcus onnurineus (strain NA1).